Consider the following 802-residue polypeptide: Ribosomal protein S6 kinase alpha-5 (802 aa).

The span at 1-22 (MEEEGGSSGGAAGTSADGGDGG) shows a compositional bias: gly residues. A disordered region spans residues 1–23 (MEEEGGSSGGAAGTSADGGDGGE). One can recognise a Protein kinase 1 domain in the interval 49-318 (FELLKVLGTG…ADEIKEHLFF (270 aa)). ATP is bound by residues 55 to 63 (LGTGAYGKV) and Lys81. Asp177 functions as the Proton acceptor in the catalytic mechanism. Phosphoserine; by autocatalysis is present on Ser212. The AGC-kinase C-terminal domain occupies 319–387 (QKINWDDLAA…VAPSILFKRN (69 aa)). Phosphoserine; by MAPK1, MAPK3 and MAPK14 is present on Ser360. Ser376 and Ser381 each carry phosphoserine; by autocatalysis. The 262-residue stretch at 426–687 (DLKDKPLGEG…MSGLRYNEWL (262 aa)) folds into the Protein kinase 2 domain. Residues 432–440 (LGEGSFSIC) and Lys455 each bind ATP. The active-site Proton acceptor is Asp544. At Thr581 the chain carries Phosphothreonine; by MAPK1, MAPK3 and MAPK14. Residues Ser647, Ser657, Ser691, and Ser695 each carry the phosphoserine modification. Residue Thr700 is modified to Phosphothreonine; by MAPK1, MAPK3 and MAPK14. The segment at 741-802 (AKRRKMKKTS…TLFQFSDSVA (62 aa)) is disordered. Residues 749–779 (TSTSTETRSSSSESSHSSSSHSHGKTTPTKT) show a composition bias toward low complexity. A phosphoserine; by autocatalysis mark is found at Ser750, Ser752, and Ser758. The segment covering 780–802 (LQPSNPADSNNPETLFQFSDSVA) has biased composition (polar residues). The residue at position 798 (Ser798) is a Phosphoserine.

It belongs to the protein kinase superfamily. AGC Ser/Thr protein kinase family. S6 kinase subfamily. In terms of assembly, forms a complex with either MAPK1/ERK2 or MAPK3/ERK1 in quiescent cells which transiently dissociates following mitogenic stimulation. Also associates with MAPK14/p38-alpha. Activated RPS6KA5 associates with and phosphorylates the NF-kappa-B p65 subunit RELA. Interacts with CREBBP and EP300. Mg(2+) serves as cofactor. In terms of processing, ser-376 and Thr-581 phosphorylation is required for kinase activity. Ser-376 and Ser-212 are autophosphorylated by the C-terminal kinase domain, and their phosphorylation is essential for the catalytic activity of the N-terminal kinase domain. Phosphorylated at Ser-360, Thr-581 and Thr-700 by MAPK1/ERK2, MAPK3/ERK1 and MAPK14/p38-alpha. Autophosphorylated at Ser-750, Ser-752 and Ser-758 by the N-terminal kinase domain. Ubiquitinated.

It is found in the nucleus. The catalysed reaction is L-seryl-[protein] + ATP = O-phospho-L-seryl-[protein] + ADP + H(+). It catalyses the reaction L-threonyl-[protein] + ATP = O-phospho-L-threonyl-[protein] + ADP + H(+). Activated by phosphorylation at Ser-360, Thr-581 and Thr-700 by MAPK1/ERK2, MAPK3/ERK1 and MAPK14/p38-alpha, and by further autophosphorylation of Ser-212, Ser-376 and Ser-381 by the activated C-terminal kinase domain. The active N-terminal kinase domain finally phosphorylates downstream substrates, as well as Ser-750, Ser-752 and Ser-758 in its own C-terminal region. In terms of biological role, serine/threonine-protein kinase that is required for the mitogen or stress-induced phosphorylation of the transcription factors CREB1 and ATF1 and for the regulation of the transcription factors RELA, STAT3 and ETV1/ER81, and that contributes to gene activation by histone phosphorylation and functions in the regulation of inflammatory genes. Phosphorylates CREB1 and ATF1 in response to mitogenic or stress stimuli such as UV-C irradiation, epidermal growth factor (EGF) and anisomycin. Plays an essential role in the control of RELA transcriptional activity in response to TNF and upon glucocorticoid, associates in the cytoplasm with the glucocorticoid receptor NR3C1 and contributes to RELA inhibition and repression of inflammatory gene expression. In skeletal myoblasts is required for phosphorylation of RELA at 'Ser-276' during oxidative stress. In erythropoietin-stimulated cells, is necessary for the 'Ser-727' phosphorylation of STAT3 and regulation of its transcriptional potential. Phosphorylates ETV1/ER81 at 'Ser-191' and 'Ser-216', and thereby regulates its ability to stimulate transcription, which may be important during development and breast tumor formation. Directly represses transcription via phosphorylation of 'Ser-1' of histone H2A. Phosphorylates 'Ser-10' of histone H3 in response to mitogenics, stress stimuli and EGF, which results in the transcriptional activation of several immediate early genes, including proto-oncogenes c-fos/FOS and c-jun/JUN. May also phosphorylate 'Ser-28' of histone H3. Mediates the mitogen- and stress-induced phosphorylation of high mobility group protein 1 (HMGN1/HMG14). In lipopolysaccharide-stimulated primary macrophages, acts downstream of the Toll-like receptor TLR4 to limit the production of pro-inflammatory cytokines. Functions probably by inducing transcription of the MAP kinase phosphatase DUSP1 and the anti-inflammatory cytokine interleukin 10 (IL10), via CREB1 and ATF1 transcription factors. Plays a role in neuronal cell death by mediating the downstream effects of excitotoxic injury. Phosphorylates TRIM7 at 'Ser-107' in response to growth factor signaling via the MEK/ERK pathway, thereby stimulating its ubiquitin ligase activity. This Pongo abelii (Sumatran orangutan) protein is Ribosomal protein S6 kinase alpha-5 (RPS6KA5).